A 287-amino-acid polypeptide reads, in one-letter code: Leukocyte-associated immunoglobulin-like receptor 1 (287 aa).

Residues 1–21 (MSPHPTALLGLVLCLAQTIHT) form the signal peptide. The Extracellular segment spans residues 22–165 (QEEDLPRPSI…SQGLKAEHLY (144 aa)). The Ig-like C2-type domain maps to 29–117 (PSISAEPGTV…KWSEQSDYLE (89 aa)). A disulfide bridge connects residues Cys49 and Cys101. A glycan (N-linked (GlcNAc...) asparagine) is linked at Asn69. Residues 121–155 (KESSGGPDSPDTEPGSSAGPTQRPSDNSHNEHAPA) are disordered. Positions 134–145 (PGSSAGPTQRPS) are enriched in polar residues. The helical transmembrane segment at 166 to 186 (ILIGVSVVFLFCLLLLVLFCL) threads the bilayer. Residues 187–287 (HRQNQIKQGP…SITYAAVARH (101 aa)) are Cytoplasmic-facing. The interval 192–211 (IKQGPPRSKDEEQKPQQRPD) is disordered. Basic and acidic residues predominate over residues 198–208 (RSKDEEQKPQQ). Short sequence motifs (ITIM motif) lie at residues 249-254 (VTYAQL) and 279-284 (ITYAAV). Tyr251 and Tyr281 each carry phosphotyrosine.

As to quaternary structure, interacts with SH2 domains of tyrosine-protein phosphatases PTPN6 and PTPN11. The interaction with PTPN6 is constitutive. Interacts with the SH2 domain of CSK. Binds with high affinity to extracellular matrix collagens, the interaction is functionally important. Phosphorylation at Tyr-251 and Tyr-281 activates it. May be phosphorylated by LCK. In terms of processing, N-glycosylated. In terms of tissue distribution, expressed on the majority of peripheral mononuclear cells, including natural killer (NK) cells, T-cells, B-cells, monocytes, and dendritic cells. Highly expressed in naive T-cells and B-cells but no expression on germinal center B-cells. Abnormally low expression in naive B-cells from HIV-1 infected patients. Very low expression in NK cells from a patient with chronic active Epstein-Barr virus infection.

The protein localises to the cell membrane. In terms of biological role, functions as an inhibitory receptor that plays a constitutive negative regulatory role on cytolytic function of natural killer (NK) cells, B-cells and T-cells. Activation by Tyr phosphorylation results in recruitment and activation of the phosphatases PTPN6 and PTPN11. It also reduces the increase of intracellular calcium evoked by B-cell receptor ligation. May also play its inhibitory role independently of SH2-containing phosphatases. Modulates cytokine production in CD4+ T-cells, down-regulating IL2 and IFNG production while inducing secretion of transforming growth factor beta. Also down-regulates IgG and IgE production in B-cells as well as IL8, IL10 and TNF secretion. Inhibits proliferation and induces apoptosis in myeloid leukemia cell lines as well as prevents nuclear translocation of NF-kappa-B p65 subunit/RELA and phosphorylation of I-kappa-B alpha/CHUK in these cells. Inhibits the differentiation of peripheral blood precursors towards dendritic cells. The polypeptide is Leukocyte-associated immunoglobulin-like receptor 1 (LAIR1) (Homo sapiens (Human)).